The sequence spans 447 residues: Kynurenine 3-monooxygenase (447 aa).

This sequence belongs to the aromatic-ring hydroxylase family. KMO subfamily. Requires FAD as cofactor.

It carries out the reaction L-kynurenine + NADPH + O2 + H(+) = 3-hydroxy-L-kynurenine + NADP(+) + H2O. It participates in cofactor biosynthesis; NAD(+) biosynthesis; quinolinate from L-kynurenine: step 1/3. In terms of biological role, catalyzes the hydroxylation of L-kynurenine (L-Kyn) to form 3-hydroxy-L-kynurenine (L-3OHKyn). Required for synthesis of quinolinic acid. The sequence is that of Kynurenine 3-monooxygenase from Christiangramia forsetii (strain DSM 17595 / CGMCC 1.15422 / KT0803) (Gramella forsetii).